Consider the following 311-residue polypeptide: Tricarboxylate transport protein, mitochondrial (311 aa).

Residues M1–A13 constitute a propeptide, removed in mature form. Solcar repeat units lie at residues T23–H111, T122–W208, and M218–L303. Helical transmembrane passes span I29–T46, G86–F105, and L129–M143. Phosphoserine is present on S156. The next 3 helical transmembrane spans lie at G183–M202, G224–L241, and G278–Y297.

It belongs to the mitochondrial carrier (TC 2.A.29) family. Post-translationally, possesses a short cleavable presequence, which, however, is found to be dispensable both for targeting to mitochondria and insertion into the inner membrane. However, the presequence is required to keep SLC25A1 in a soluble state and thus in an import-competent state. Mature SLC25A1 lacking the presequence is prone to aggregation.

The protein localises to the mitochondrion inner membrane. The enzyme catalyses (S)-malate(in) + citrate(out) = (S)-malate(out) + citrate(in). It catalyses the reaction D-threo-isocitrate(in) + citrate(out) = D-threo-isocitrate(out) + citrate(in). It carries out the reaction citrate(out) + succinate(in) = citrate(in) + succinate(out). The catalysed reaction is cis-aconitate(in) + citrate(out) = cis-aconitate(out) + citrate(in). The enzyme catalyses trans-aconitate(in) + citrate(out) = trans-aconitate(out) + citrate(in). It catalyses the reaction phosphoenolpyruvate(in) + citrate(out) = phosphoenolpyruvate(out) + citrate(in). It carries out the reaction maleate(in) + citrate(out) = maleate(out) + citrate(in). Mitochondrial electroneutral antiporter that exports citrate from the mitochondria into the cytosol in exchange for malate. Also able to mediate the exchange of citrate for isocitrate, phosphoenolpyruvate, cis-aconitate and to a lesser extent trans-aconitate, maleate and succinate. In the cytoplasm, citrate plays important roles in fatty acid and sterol synthesis, regulation of glycolysis, protein acetylation, and other physiopathological processes. This Homo sapiens (Human) protein is Tricarboxylate transport protein, mitochondrial (SLC25A1).